The following is a 701-amino-acid chain: Polyribonucleotide nucleotidyltransferase (701 aa).

Mg(2+)-binding residues include Asp-490 and Asp-496. The KH domain occupies 557-616 (PKVETMTIKPEKIRDVIGPGGKKINEIIDETGVKLDIEQDGTIFIGAVDQDMINRAREII). Residues 626–694 (GQVYNAKVRR…DKGRVNASHR (69 aa)) enclose the S1 motif domain.

The protein belongs to the polyribonucleotide nucleotidyltransferase family. It depends on Mg(2+) as a cofactor.

It localises to the cytoplasm. It catalyses the reaction RNA(n+1) + phosphate = RNA(n) + a ribonucleoside 5'-diphosphate. In terms of biological role, involved in mRNA degradation. Catalyzes the phosphorolysis of single-stranded polyribonucleotides processively in the 3'- to 5'-direction. The sequence is that of Polyribonucleotide nucleotidyltransferase from Staphylococcus carnosus (strain TM300).